The chain runs to 383 residues: Chaperone protein DnaJ (383 aa).

Residues 5-69 form the J domain; sequence DYYDILGVSK…QKRAQYDQFG (65 aa). The CR-type zinc-finger motif lies at 138 to 222; the sequence is GKTTTIKYDR…CHGAGHVHER (85 aa). Cysteine 151, cysteine 154, cysteine 168, cysteine 171, cysteine 194, cysteine 197, cysteine 210, and cysteine 213 together coordinate Zn(2+). 4 CXXCXGXG motif repeats span residues 151 to 158, 168 to 175, 194 to 201, and 210 to 217; these read CKTCHGTG, CPRCHGAG, CPECNGTG, and CDTCHGAG.

Belongs to the DnaJ family. Homodimer. Zn(2+) is required as a cofactor.

The protein resides in the cytoplasm. Participates actively in the response to hyperosmotic and heat shock by preventing the aggregation of stress-denatured proteins and by disaggregating proteins, also in an autonomous, DnaK-independent fashion. Unfolded proteins bind initially to DnaJ; upon interaction with the DnaJ-bound protein, DnaK hydrolyzes its bound ATP, resulting in the formation of a stable complex. GrpE releases ADP from DnaK; ATP binding to DnaK triggers the release of the substrate protein, thus completing the reaction cycle. Several rounds of ATP-dependent interactions between DnaJ, DnaK and GrpE are required for fully efficient folding. Also involved, together with DnaK and GrpE, in the DNA replication of plasmids through activation of initiation proteins. This Limosilactobacillus reuteri (strain DSM 20016) (Lactobacillus reuteri) protein is Chaperone protein DnaJ.